The chain runs to 504 residues: Glycerol kinase (504 aa).

An ADP-binding site is contributed by threonine 14. Positions 14, 15, and 16 each coordinate ATP. Residue threonine 14 participates in sn-glycerol 3-phosphate binding. An ADP-binding site is contributed by arginine 18. 3 residues coordinate sn-glycerol 3-phosphate: arginine 84, glutamate 85, and tyrosine 136. Glycerol contacts are provided by arginine 84, glutamate 85, and tyrosine 136. Position 232 is a phosphohistidine; by HPr (histidine 232). Sn-glycerol 3-phosphate is bound at residue aspartate 246. Glycerol is bound by residues aspartate 246 and glutamine 247. The ADP site is built by threonine 268 and glycine 311. Residues threonine 268, glycine 311, glutamine 315, and glycine 412 each contribute to the ATP site. The ADP site is built by glycine 412 and asparagine 416.

The protein belongs to the FGGY kinase family. Homotetramer and homodimer (in equilibrium). The phosphoenolpyruvate-dependent sugar phosphotransferase system (PTS), including enzyme I, and histidine-containing protein (HPr) are required for the phosphorylation, which leads to the activation of the enzyme.

It carries out the reaction glycerol + ATP = sn-glycerol 3-phosphate + ADP + H(+). It participates in polyol metabolism; glycerol degradation via glycerol kinase pathway; sn-glycerol 3-phosphate from glycerol: step 1/1. Activated by phosphorylation and inhibited by fructose 1,6-bisphosphate (FBP). Key enzyme in the regulation of glycerol uptake and metabolism. Catalyzes the phosphorylation of glycerol to yield sn-glycerol 3-phosphate. This chain is Glycerol kinase, found in Streptococcus pyogenes serotype M6 (strain ATCC BAA-946 / MGAS10394).